A 945-amino-acid polypeptide reads, in one-letter code: Isoleucine--tRNA ligase (945 aa).

The 'HIGH' region motif lies at 66-76 (PYANGDIHLGH). Glutamate 581 contacts L-isoleucyl-5'-AMP. A 'KMSKS' region motif is present at residues 622-626 (KMSKS). An ATP-binding site is contributed by lysine 625. Zn(2+) is bound by residues cysteine 908, cysteine 911, cysteine 928, and cysteine 931.

It belongs to the class-I aminoacyl-tRNA synthetase family. IleS type 1 subfamily. In terms of assembly, monomer. The cofactor is Zn(2+).

The protein localises to the cytoplasm. It carries out the reaction tRNA(Ile) + L-isoleucine + ATP = L-isoleucyl-tRNA(Ile) + AMP + diphosphate. Its function is as follows. Catalyzes the attachment of isoleucine to tRNA(Ile). As IleRS can inadvertently accommodate and process structurally similar amino acids such as valine, to avoid such errors it has two additional distinct tRNA(Ile)-dependent editing activities. One activity is designated as 'pretransfer' editing and involves the hydrolysis of activated Val-AMP. The other activity is designated 'posttransfer' editing and involves deacylation of mischarged Val-tRNA(Ile). The polypeptide is Isoleucine--tRNA ligase (Burkholderia ambifaria (strain MC40-6)).